The primary structure comprises 148 residues: MMTQFWITTPLEKMTPEQWESLCDGCGKCCLNKIIDDETDELYYTNAACHLLDNDTCGCRRYPNRFTYVPECTSITPENIAELTWLPDSCAYRRLHVGKGLPSWHPLLTGNKEAMHAAGISVQGKTVNEMKVKYLEDCIVLWPMLDVE.

The protein belongs to the UPF0260 family.

In Shewanella frigidimarina (strain NCIMB 400), this protein is UPF0260 protein Sfri_1740.